A 151-amino-acid polypeptide reads, in one-letter code: uncharacterized protein (151 aa).

The tract at residues 1-77 is disordered; that stretch reads MSLLGGMWKS…LGSNPISSSR (77 aa). Low complexity-rich tracts occupy residues 19-54 and 63-76; these read PKPSSNPLRSSGLNSGMSSRLNSKSSLRSGHSRSSN and SISGSLGSNPISSS.

This is an uncharacterized protein from Methanothermobacter marburgensis (strain ATCC BAA-927 / DSM 2133 / JCM 14651 / NBRC 100331 / OCM 82 / Marburg) (Methanobacterium thermoautotrophicum).